The chain runs to 871 residues: DNA mismatch repair protein MutS (871 aa).

620 to 627 contributes to the ATP binding site; the sequence is GPNMGGKS. The disordered stretch occupies residues 806 to 837; that stretch reads HHGGLNEPKQATMELTPPPEAIPSHTEKRNPL.

It belongs to the DNA mismatch repair MutS family.

Its function is as follows. This protein is involved in the repair of mismatches in DNA. It is possible that it carries out the mismatch recognition step. This protein has a weak ATPase activity. The chain is DNA mismatch repair protein MutS from Idiomarina loihiensis (strain ATCC BAA-735 / DSM 15497 / L2-TR).